The sequence spans 276 residues: Elongation factor Ts, mitochondrial (276 aa).

This sequence belongs to the EF-Ts family.

It is found in the mitochondrion. Associates with the EF-Tu.GDP complex and induces the exchange of GDP to GTP. It remains bound to the aminoacyl-tRNA.EF-Tu.GTP complex up to the GTP hydrolysis stage on the ribosome. In Leishmania braziliensis, this protein is Elongation factor Ts, mitochondrial.